Consider the following 186-residue polypeptide: uncharacterized protein (186 aa).

Residues Thr-121–Glu-146 are disordered.

The protein belongs to the chlamydial CPn_0422/CT_273/TC_0545 family.

This is an uncharacterized protein from Chlamydia muridarum (strain MoPn / Nigg).